The chain runs to 190 residues: Somatotropin (190 aa).

The first 17 residues, 1–17, serve as a signal peptide directing secretion; the sequence is MNRVILLLSVMCVGVSS. 2 disulfide bridges follow: cysteine 69–cysteine 163 and cysteine 180–cysteine 188.

It belongs to the somatotropin/prolactin family.

The protein resides in the secreted. Growth hormone plays an important role in growth control and is involved in the regulation of several anabolic processes. Implicated as an osmoregulatory substance important for seawater adaptation. This is Somatotropin (gh) from Paralichthys olivaceus (Bastard halibut).